The chain runs to 632 residues: 1-deoxy-D-xylulose-5-phosphate synthase (632 aa).

Thiamine diphosphate contacts are provided by residues H78 and 119–121; that span reads AHS. D150 lines the Mg(2+) pocket. Thiamine diphosphate is bound by residues 151-152, N179, Y286, and E368; that span reads GA. Residue N179 participates in Mg(2+) binding.

This sequence belongs to the transketolase family. DXPS subfamily. In terms of assembly, homodimer. Requires Mg(2+) as cofactor. Thiamine diphosphate serves as cofactor.

It carries out the reaction D-glyceraldehyde 3-phosphate + pyruvate + H(+) = 1-deoxy-D-xylulose 5-phosphate + CO2. It participates in metabolic intermediate biosynthesis; 1-deoxy-D-xylulose 5-phosphate biosynthesis; 1-deoxy-D-xylulose 5-phosphate from D-glyceraldehyde 3-phosphate and pyruvate: step 1/1. Functionally, catalyzes the acyloin condensation reaction between C atoms 2 and 3 of pyruvate and glyceraldehyde 3-phosphate to yield 1-deoxy-D-xylulose-5-phosphate (DXP). This is 1-deoxy-D-xylulose-5-phosphate synthase from Albidiferax ferrireducens (strain ATCC BAA-621 / DSM 15236 / T118) (Rhodoferax ferrireducens).